The following is a 485-amino-acid chain: Acetyl-coenzyme A carboxylase carboxyl transferase subunit beta, chloroplastic (485 aa).

Positions 218–485 (LWIQCDNCYA…FFPLNKNEIK (268 aa)) constitute a CoA carboxyltransferase N-terminal domain. Residues C222, C225, C241, and C244 each contribute to the Zn(2+) site. Residues 222 to 244 (CDNCYALIYKKALKFKMNVCEQC) form a C4-type zinc finger.

Belongs to the AccD/PCCB family. In terms of assembly, acetyl-CoA carboxylase is a heterohexamer composed of biotin carboxyl carrier protein, biotin carboxylase and 2 subunits each of ACCase subunit alpha and ACCase plastid-coded subunit beta (accD). Zn(2+) is required as a cofactor.

Its subcellular location is the plastid. It localises to the chloroplast stroma. The enzyme catalyses N(6)-carboxybiotinyl-L-lysyl-[protein] + acetyl-CoA = N(6)-biotinyl-L-lysyl-[protein] + malonyl-CoA. It participates in lipid metabolism; malonyl-CoA biosynthesis; malonyl-CoA from acetyl-CoA: step 1/1. Functionally, component of the acetyl coenzyme A carboxylase (ACC) complex. Biotin carboxylase (BC) catalyzes the carboxylation of biotin on its carrier protein (BCCP) and then the CO(2) group is transferred by the transcarboxylase to acetyl-CoA to form malonyl-CoA. The protein is Acetyl-coenzyme A carboxylase carboxyl transferase subunit beta, chloroplastic of Aethionema cordifolium (Lebanon stonecress).